The chain runs to 218 residues: Histone H1.1 (218 aa).

Residues 1-42 are disordered; the sequence is MSEVALPAPAASTSPEKPSAGKKAKKPAKAAAAAKKKPAGPS. Ser-2 is modified (N-acetylserine). Phosphoserine is present on residues Ser-2 and Ser-12. N6-acetyllysine is present on Lys-17. Positions 20-38 are enriched in basic residues; it reads AGKKAKKPAKAAAAAKKKP. Lys-37 carries the N6-(beta-hydroxybutyryl)lysine modification. Positions 39–112 constitute an H15 domain; it reads AGPSVSELIV…GASGSFKLNK (74 aa). Ser-44 is modified (phosphoserine). An N6-(beta-hydroxybutyryl)lysine modification is found at Lys-55. Position 57 is a citrulline (Arg-57). Lys-67 is subject to N6-(beta-hydroxybutyryl)lysine. Lys-78 carries the N6-acetyllysine modification. N6-(beta-hydroxybutyryl)lysine is present on Lys-88. Lys-93 carries the N6-(beta-hydroxybutyryl)lysine; alternate modification. N6-acetyllysine; alternate is present on Lys-93. Position 107 is a phosphoserine; by PKC (Ser-107). An N6-(beta-hydroxybutyryl)lysine modification is found at Lys-109. A disordered region spans residues 116–218; sequence SVDAKPTATK…KPKKAAPKKK (103 aa). Positions 119–149 are enriched in low complexity; the sequence is AKPTATKVATKTKVTSASKKPKKASGAAAAK. Lys-125 carries the N6-acetyllysine modification. 2 stretches are compositionally biased toward basic residues: residues 150-183 and 190-218; these read KSVK…KKVA and KAVK…PKKK. Thr-206 is subject to Phosphothreonine.

The protein belongs to the histone H1/H5 family. As to quaternary structure, interacts with DFFB. Post-translationally, H1 histones are progressively phosphorylated during the cell cycle, becoming maximally phosphorylated during late G2 phase and M phase, and being dephosphorylated sharply thereafter. Citrullination at Arg-57 (H1R54ci) by PADI4 takes place within the DNA-binding site of H1 and results in its displacement from chromatin and global chromatin decondensation, thereby promoting pluripotency and stem cell maintenance.

Its subcellular location is the nucleus. It is found in the chromosome. In terms of biological role, H1 histones bind to linker DNA between nucleosomes forming the macromolecular structure known as the chromatin fiber. H1 histones are necessary for the condensation of nucleosome chains into higher-order structured fibers. Also acts as a regulator of individual gene transcription through chromatin remodeling. In Bos taurus (Bovine), this protein is Histone H1.1.